The sequence spans 156 residues: Small ribosomal subunit protein uS7 (156 aa).

It belongs to the universal ribosomal protein uS7 family. In terms of assembly, part of the 30S ribosomal subunit. Contacts proteins S9 and S11.

Functionally, one of the primary rRNA binding proteins, it binds directly to 16S rRNA where it nucleates assembly of the head domain of the 30S subunit. Is located at the subunit interface close to the decoding center, probably blocks exit of the E-site tRNA. This chain is Small ribosomal subunit protein uS7, found in Clostridium novyi (strain NT).